Reading from the N-terminus, the 429-residue chain is Glucose-1-phosphate adenylyltransferase (429 aa).

Alpha-D-glucose 1-phosphate-binding positions include Gly162, 177–178 (EK), and Ser209.

The protein belongs to the bacterial/plant glucose-1-phosphate adenylyltransferase family. In terms of assembly, homotetramer.

It catalyses the reaction alpha-D-glucose 1-phosphate + ATP + H(+) = ADP-alpha-D-glucose + diphosphate. It participates in glycan biosynthesis; glycogen biosynthesis. In terms of biological role, involved in the biosynthesis of ADP-glucose, a building block required for the elongation reactions to produce glycogen. Catalyzes the reaction between ATP and alpha-D-glucose 1-phosphate (G1P) to produce pyrophosphate and ADP-Glc. This Trichormus variabilis (strain ATCC 29413 / PCC 7937) (Anabaena variabilis) protein is Glucose-1-phosphate adenylyltransferase.